We begin with the raw amino-acid sequence, 453 residues long: Asparagine--tRNA ligase (453 aa).

The protein belongs to the class-II aminoacyl-tRNA synthetase family. As to quaternary structure, homodimer.

The protein localises to the cytoplasm. The enzyme catalyses tRNA(Asn) + L-asparagine + ATP = L-asparaginyl-tRNA(Asn) + AMP + diphosphate + H(+). The protein is Asparagine--tRNA ligase of Malacoplasma penetrans (strain HF-2) (Mycoplasma penetrans).